The chain runs to 247 residues: 3-deoxy-manno-octulosonate cytidylyltransferase (247 aa).

This sequence belongs to the KdsB family.

It is found in the cytoplasm. It catalyses the reaction 3-deoxy-alpha-D-manno-oct-2-ulosonate + CTP = CMP-3-deoxy-beta-D-manno-octulosonate + diphosphate. It participates in nucleotide-sugar biosynthesis; CMP-3-deoxy-D-manno-octulosonate biosynthesis; CMP-3-deoxy-D-manno-octulosonate from 3-deoxy-D-manno-octulosonate and CTP: step 1/1. The protein operates within bacterial outer membrane biogenesis; lipopolysaccharide biosynthesis. Functionally, activates KDO (a required 8-carbon sugar) for incorporation into bacterial lipopolysaccharide in Gram-negative bacteria. The protein is 3-deoxy-manno-octulosonate cytidylyltransferase of Methylorubrum extorquens (strain PA1) (Methylobacterium extorquens).